We begin with the raw amino-acid sequence, 341 residues long: Transcription factor ETV7 (341 aa).

The region spanning 33-117 (NLLGEGGICK…ELLQYIKTQR (85 aa)) is the PNT domain. The ETS DNA-binding region spans 224-305 (RLLWDYVYQL…PGQKLLFRFL (82 aa)). The disordered stretch occupies residues 315–341 (KHSHLEPLESQEQDRIEFKDKRPEISP).

Belongs to the ETS family. As to expression, expressed in hematopoietic tissues.

The protein resides in the nucleus. Transcriptional repressor; binds to the DNA sequence 5'-CCGGAAGT-3'. Isoform A does not seem to have a repressor activity. Isoform C does not seem to have a repressor activity. This Homo sapiens (Human) protein is Transcription factor ETV7 (ETV7).